A 110-amino-acid polypeptide reads, in one-letter code: Minor capsid protein VP2 (110 aa).

This sequence belongs to the vesivirus VP2 protein family. As to quaternary structure, homooligomer. The portal-like structure consists in 12 copies of VP2. Interacts with capsid protein VP1.

It localises to the virion. Its subcellular location is the host cytoplasm. Functionally, minor structural protein that forms a portal-like structure at a unique three-fold axis of symmetry, following binding to the host receptor. The channel formed by VP2 may allow the delivery of the viral genome through the host endosomal membrane. In Otariidae (fur seals &amp; sea lions), this protein is Minor capsid protein VP2.